Consider the following 191-residue polypeptide: Dirigent protein 3 (191 aa).

Positions 1–21 (MSKLILILTAQILLLTATALA) are cleaved as a signal peptide. Asn-96 and Asn-131 each carry an N-linked (GlcNAc...) asparagine glycan.

Belongs to the plant dirigent protein family. As to quaternary structure, homodimer.

Its subcellular location is the secreted. It is found in the extracellular space. It localises to the apoplast. Functionally, dirigent proteins impart stereoselectivity on the phenoxy radical-coupling reaction, yielding optically active lignans from two molecules of coniferyl alcohol in the biosynthesis of lignans, flavonolignans, and alkaloids and thus plays a central role in plant secondary metabolism. This chain is Dirigent protein 3 (DIR3), found in Arabidopsis thaliana (Mouse-ear cress).